We begin with the raw amino-acid sequence, 187 residues long: Lipid A acyltransferase PagP (187 aa).

The first 26 residues, 1–26 (MIVAKKYFLVLSFLFVQFALLPQAFS), serve as a signal peptide directing secretion. Residues His-59, Asp-102, and Ser-103 contribute to the active site.

It belongs to the lipid A palmitoyltransferase family. As to quaternary structure, homodimer.

Its subcellular location is the cell outer membrane. The enzyme catalyses a lipid A + a 1,2-diacyl-sn-glycero-3-phosphocholine = a hepta-acyl lipid A + a 2-acyl-sn-glycero-3-phosphocholine. The catalysed reaction is a lipid IVA + a 1,2-diacyl-sn-glycero-3-phosphocholine = a lipid IVB + a 2-acyl-sn-glycero-3-phosphocholine. It carries out the reaction a lipid IIA + a 1,2-diacyl-sn-glycero-3-phosphocholine = a lipid IIB + a 2-acyl-sn-glycero-3-phosphocholine. In terms of biological role, transfers a fatty acid residue from the sn-1 position of a phospholipid to the N-linked hydroxyfatty acid chain on the proximal unit of lipid A or its precursors. This Citrobacter koseri (strain ATCC BAA-895 / CDC 4225-83 / SGSC4696) protein is Lipid A acyltransferase PagP.